A 314-amino-acid polypeptide reads, in one-letter code: Beta-lactamase 2 (314 aa).

Residues 1–26 (MLHTRIRRATLGAVAALSLVPVMACG) form the signal peptide. Positions 32–47 (DAAEPAGSAPSSSAAA) are enriched in low complexity. The disordered stretch occupies residues 32–51 (DAAEPAGSAPSSSAAAHKPG). The active-site Acyl-ester intermediate is the S96. 258–260 (KTG) is a substrate binding site.

The protein belongs to the class-A beta-lactamase family.

It carries out the reaction a beta-lactam + H2O = a substituted beta-amino acid. This is Beta-lactamase 2 (blaU) from Streptomyces cacaoi.